The sequence spans 401 residues: Imidazolonepropionase (401 aa).

Positions 70 and 72 each coordinate Fe(3+). Zn(2+)-binding residues include histidine 70 and histidine 72. 3 residues coordinate 4-imidazolone-5-propanoate: arginine 79, tyrosine 142, and histidine 175. Tyrosine 142 is an N-formimidoyl-L-glutamate binding site. Position 238 (histidine 238) interacts with Fe(3+). Histidine 238 lines the Zn(2+) pocket. Residue glutamine 241 coordinates 4-imidazolone-5-propanoate. Aspartate 313 contacts Fe(3+). Aspartate 313 serves as a coordination point for Zn(2+). Asparagine 315 and glycine 317 together coordinate N-formimidoyl-L-glutamate. Threonine 318 provides a ligand contact to 4-imidazolone-5-propanoate.

It belongs to the metallo-dependent hydrolases superfamily. HutI family. Zn(2+) serves as cofactor. The cofactor is Fe(3+).

It localises to the cytoplasm. It catalyses the reaction 4-imidazolone-5-propanoate + H2O = N-formimidoyl-L-glutamate. The protein operates within amino-acid degradation; L-histidine degradation into L-glutamate; N-formimidoyl-L-glutamate from L-histidine: step 3/3. Functionally, catalyzes the hydrolytic cleavage of the carbon-nitrogen bond in imidazolone-5-propanoate to yield N-formimidoyl-L-glutamate. It is the third step in the universal histidine degradation pathway. The polypeptide is Imidazolonepropionase (Xanthomonas euvesicatoria pv. vesicatoria (strain 85-10) (Xanthomonas campestris pv. vesicatoria)).